The following is a 504-amino-acid chain: Protein psiD (504 aa).

Positions 1–21 (MKYSYLLLILLLSNLYKEGFS) are cleaved as a signal peptide. N-linked (GlcNAc...) asparagine glycosylation is found at N87, N136, N236, N252, N290, and N373. Positions 111-251 (LTRVGDSTYA…YDACGVCDGH (141 aa)) constitute a PA14 domain. Over residues 417–430 (TVTPTVTPTVTPTP) the composition is skewed to low complexity. A disordered region spans residues 417–453 (TVTPTVTPTVTPTPTTTPTPSPTTVPPRPTPTPLPAD). Pro residues predominate over residues 431 to 453 (TTTPTPSPTTVPPRPTPTPLPAD). An N-linked (GlcNAc...) asparagine glycan is attached at N483.

It belongs to the prespore-cell-inducing factor family.

Its subcellular location is the secreted. This chain is Protein psiD (psiD), found in Dictyostelium discoideum (Social amoeba).